The chain runs to 390 residues: Putative 8-amino-7-oxononanoate synthase (390 aa).

Arginine 19 is a binding site for substrate. 105–106 (GY) lines the pyridoxal 5'-phosphate pocket. Residue histidine 130 coordinates substrate. Pyridoxal 5'-phosphate contacts are provided by residues serine 177, 202–205 (DEAH), and 234–237 (TFSK). Lysine 237 carries the post-translational modification N6-(pyridoxal phosphate)lysine. Threonine 351 is a substrate binding site.

It belongs to the class-II pyridoxal-phosphate-dependent aminotransferase family. BioF subfamily. As to quaternary structure, homodimer. Requires pyridoxal 5'-phosphate as cofactor.

The catalysed reaction is 6-carboxyhexanoyl-[ACP] + L-alanine + H(+) = (8S)-8-amino-7-oxononanoate + holo-[ACP] + CO2. The protein operates within cofactor biosynthesis; biotin biosynthesis. Its function is as follows. Catalyzes the decarboxylative condensation of pimeloyl-[acyl-carrier protein] and L-alanine to produce 8-amino-7-oxononanoate (AON), [acyl-carrier protein], and carbon dioxide. In Geobacillus kaustophilus (strain HTA426), this protein is Putative 8-amino-7-oxononanoate synthase (bioF).